The sequence spans 302 residues: MKIVFMGTPEYATAILRALFENNFKISAVFTQPDKPVGRKQILTPPDVKKFLLESHADTPIFQPSNIKTPEIAKKICEFSPDFIVVAAYGQILPLEILEICPCINLHASILPKFRGASPIQSAILEGEKISGVTAMKMGAGLDDGDILGFSFCGIQKLDESEVFHKFGNVAAKLCIKILQNFDDIAPLKQKNVLSSKCKKIKKTDGLVKFSDSADEISAKFSAFKTWPGIFLENGTKLLEIRKFSDEKKEFGKISHITKDGFTLAVKDGEIEILKLQEPSKKAILARDFINGKRLKIGDRIS.

109-112 provides a ligand contact to (6S)-5,6,7,8-tetrahydrofolate; that stretch reads SILP.

It belongs to the Fmt family.

It catalyses the reaction L-methionyl-tRNA(fMet) + (6R)-10-formyltetrahydrofolate = N-formyl-L-methionyl-tRNA(fMet) + (6S)-5,6,7,8-tetrahydrofolate + H(+). In terms of biological role, attaches a formyl group to the free amino group of methionyl-tRNA(fMet). The formyl group appears to play a dual role in the initiator identity of N-formylmethionyl-tRNA by promoting its recognition by IF2 and preventing the misappropriation of this tRNA by the elongation apparatus. This Campylobacter hominis (strain ATCC BAA-381 / DSM 21671 / CCUG 45161 / LMG 19568 / NCTC 13146 / CH001A) protein is Methionyl-tRNA formyltransferase.